The sequence spans 81 residues: Photosystem I iron-sulfur center (81 aa).

2 consecutive 4Fe-4S ferredoxin-type domains span residues 2 to 31 (SHKI…MIPW) and 39 to 68 (IASA…VRVY). [4Fe-4S] cluster contacts are provided by cysteine 11, cysteine 14, cysteine 17, cysteine 21, cysteine 48, cysteine 51, cysteine 54, and cysteine 58.

In terms of assembly, the eukaryotic PSI reaction center is composed of at least 11 subunits. The cofactor is [4Fe-4S] cluster.

It localises to the plastid. The protein resides in the chloroplast thylakoid membrane. The enzyme catalyses reduced [plastocyanin] + hnu + oxidized [2Fe-2S]-[ferredoxin] = oxidized [plastocyanin] + reduced [2Fe-2S]-[ferredoxin]. In terms of biological role, apoprotein for the two 4Fe-4S centers FA and FB of photosystem I (PSI); essential for photochemical activity. FB is the terminal electron acceptor of PSI, donating electrons to ferredoxin. The C-terminus interacts with PsaA/B/D and helps assemble the protein into the PSI complex. Required for binding of PsaD and PsaE to PSI. PSI is a plastocyanin-ferredoxin oxidoreductase, converting photonic excitation into a charge separation, which transfers an electron from the donor P700 chlorophyll pair to the spectroscopically characterized acceptors A0, A1, FX, FA and FB in turn. The protein is Photosystem I iron-sulfur center of Chara vulgaris (Common stonewort).